A 210-amino-acid polypeptide reads, in one-letter code: MKGLMGRKVGMTQIFNEDGIVTPVTVIEVAENVVTQIKSDETDGYNSVQVGYGEKKIKNTIKPLQGHFEKAGTTPKRTMKEFRVDSTEGFTAGQELKADLFQAGDKVDVTGISKGKGFQGVIKRHGQSRGPMAHGSRYHRRPGSMGASAYPGRVFKGKNLPGHMGNVQVTAQNLEIVRVDLEKNLLLIKGAVPGPKKGVLVIQTTVKQGK.

Residues 123–144 (KRHGQSRGPMAHGSRYHRRPGS) form a disordered region.

It belongs to the universal ribosomal protein uL3 family. Part of the 50S ribosomal subunit. Forms a cluster with proteins L14 and L19.

One of the primary rRNA binding proteins, it binds directly near the 3'-end of the 23S rRNA, where it nucleates assembly of the 50S subunit. In Alkaliphilus metalliredigens (strain QYMF), this protein is Large ribosomal subunit protein uL3.